A 231-amino-acid chain; its full sequence is Probable tetraspanin tspE (231 aa).

At 1 to 21 the chain is on the cytoplasmic side; it reads MTFVDNFEFNQNTPRLVRGPF. A helical membrane pass occupies residues 22–42; that stretch reads IILNSIIFSLSFILLCSTGII. At 43-58 the chain is on the extracellular side; that stretch reads IYYLNEYYLVKDLTIP. Residues 59–79 form a helical membrane-spanning segment; it reads LGSFILSAYMVITTIVGGIAI. Residues 80–83 are Cytoplasmic-facing; that stretch reads WKKK. Residues 84-104 form a helical membrane-spanning segment; sequence LGLHLTFMVFLVVLIVCLVGV. The Extracellular segment spans residues 105 to 195; that stretch reads SAKMIVDSGN…VESILKYLGY (91 aa). The helical transmembrane segment at 196 to 216 threads the bilayer; it reads YGIVLSVIELILLILSGFFLL. The Cytoplasmic portion of the chain corresponds to 217 to 231; the sequence is KTNKNVKSKSFILQD.

This sequence belongs to the tetraspanin (TM4SF) family.

It is found in the membrane. This Dictyostelium discoideum (Social amoeba) protein is Probable tetraspanin tspE (tspE).